Here is a 76-residue protein sequence, read N- to C-terminus: UPF0235 protein MMAR_2910 (76 aa).

This sequence belongs to the UPF0235 family.

The sequence is that of UPF0235 protein MMAR_2910 from Mycobacterium marinum (strain ATCC BAA-535 / M).